Consider the following 573-residue polypeptide: MSLSGLISTTTFKEQPAIVRRSGNYKPPLWDAHFIQSLQVIYTEESYGKRINELKEDVRRILEKEAENPLVKLEQINDLSRLGISYHFEDQIKAILNLTYNNNNALWKKDNLYATALHFKLLRQYGFNPVSSEIFNAFKDEKKEFKESLSKDVKGMVCLYEASFYSFRGEPILDEARDFTTKHLKQYLMMTRQGQNVDHDDDNDLMVKLVEHALELPVHWRMKRLEARWFIDMYAEMSHHHHMNSTFLQLAKLDFNVVQSTYQEDLKHVVRWWKTTSLGERLPFARDRIVEIFLWSVGLKFEPQFRYCRKMLTKIGQLVTTMDDIFDVYGTLDELSLFQHALGRWDINTIDQLPDYMKIFFLATYNVVNEMAYDVLKQNGILIIKYLKKTWTDLCKCYMLEANWYHSGYTPSLEEYIKNGWISIAEPLILVNLYCLITNPIKEDDIDCLLQYPTFIRISGIIARLVDDLGTSSDELKRGDNPKSIQCYMKENGICDEKNGREHIRNLISETWKEMNEARVGESPFSQAFIETAIDFVRTAMMIYQKEQDGVGTNIDHYTKDGIISLFFTSIPI.

Arg286, Asp323, Asp327, Arg464, and Asp467 together coordinate (2E)-geranyl diphosphate. Mg(2+) is bound by residues Asp323 and Asp327. The DDXXD motif motif lies at 323-327; the sequence is DDIFD. Residues Asp467, Thr471, and Glu475 each contribute to the Mg(2+) site.

Belongs to the terpene synthase family. Tpsb subfamily. It depends on Mg(2+) as a cofactor. Mn(2+) serves as cofactor. In terms of tissue distribution, expressed in glandular trichomes two to four weeks after flowering onset.

It catalyses the reaction (2E)-geranyl diphosphate = beta-myrcene + diphosphate. It carries out the reaction (2E)-geranyl diphosphate = (1R,5R)-alpha-pinene + diphosphate. The catalysed reaction is (2E)-geranyl diphosphate = sabinene + diphosphate. The enzyme catalyses (2E)-geranyl diphosphate = (4S)-limonene + diphosphate. It catalyses the reaction (2E)-geranyl diphosphate = terpinolene + diphosphate. It carries out the reaction (2E)-geranyl diphosphate = camphene + diphosphate. It functions in the pathway secondary metabolite biosynthesis; terpenoid biosynthesis. Its function is as follows. Involved in monoterpene (C10) olefins biosynthesis, constituants of cannabinoids and terpenoids-rich resins. Catalyzes mainly the conversion of (2E)-geranyl diphosphate to beta-myrcene, and also produces minor products such as alpha-pinene, camphene, sabinene, limonene and terpinolene. This chain is Myrcene synthase TPS5FN, found in Cannabis sativa (Hemp).